Consider the following 339-residue polypeptide: Heat-inducible transcription repressor HrcA (339 aa).

It belongs to the HrcA family.

Negative regulator of class I heat shock genes (grpE-dnaK-dnaJ and groELS operons). Prevents heat-shock induction of these operons. The protein is Heat-inducible transcription repressor HrcA of Nitrosospira multiformis (strain ATCC 25196 / NCIMB 11849 / C 71).